The sequence spans 227 residues: ATP-dependent Clp protease proteolytic subunit (227 aa).

Ser120 functions as the Nucleophile in the catalytic mechanism. His145 is a catalytic residue.

Belongs to the peptidase S14 family. As to quaternary structure, fourteen ClpP subunits assemble into 2 heptameric rings which stack back to back to give a disk-like structure with a central cavity, resembling the structure of eukaryotic proteasomes.

It localises to the cytoplasm. It catalyses the reaction Hydrolysis of proteins to small peptides in the presence of ATP and magnesium. alpha-casein is the usual test substrate. In the absence of ATP, only oligopeptides shorter than five residues are hydrolyzed (such as succinyl-Leu-Tyr-|-NHMec, and Leu-Tyr-Leu-|-Tyr-Trp, in which cleavage of the -Tyr-|-Leu- and -Tyr-|-Trp bonds also occurs).. In terms of biological role, cleaves peptides in various proteins in a process that requires ATP hydrolysis. Has a chymotrypsin-like activity. Plays a major role in the degradation of misfolded proteins. This is ATP-dependent Clp protease proteolytic subunit from Rickettsia bellii (strain RML369-C).